A 322-amino-acid chain; its full sequence is Germ cell-specific gene 1-like protein (322 aa).

Over 1 to 8 (MELSRRNR) the chain is Cytoplasmic. The helical transmembrane segment at 9–29 (SLLSVVLNLLALSFSVAAFFT) threads the bilayer. The Extracellular portion of the chain corresponds to 30–125 (SYWCEGTHKV…IELSPDSEKG (96 aa)). A helical transmembrane segment spans residues 126-146 (VLWLSVISEFLYIILLSLGFL). The Cytoplasmic portion of the chain corresponds to 147-166 (LMCLEFFSSSNFIDGLKINA). The chain crosses the membrane as a helical span at residues 167–187 (FAAIITVLSGLLGMVAHMMYM). Residues 188–209 (TVFQVTVNLGPKDWRPQTWYYG) are Extracellular-facing. The chain crosses the membrane as a helical span at residues 210–230 (WSFGLAWLSFTLCMSASVLTL). Residues 231–322 (NTYTKTILEF…MDLEDDGDQC (92 aa)) lie on the Cytoplasmic side of the membrane.

This sequence belongs to the GSG1 family. Component of the AMPAR complex.

Its subcellular location is the cell membrane. It localises to the synapse. In terms of biological role, as a component of the AMPAR complex, modifies AMPA receptor (AMPAR) gating. This is Germ cell-specific gene 1-like protein (gsg1l) from Xenopus tropicalis (Western clawed frog).